The primary structure comprises 158 residues: 2-C-methyl-D-erythritol 2,4-cyclodiphosphate synthase (158 aa).

Residues Asp-8 and His-10 each contribute to the a divalent metal cation site. Residues 8-10 and 34-35 each bind 4-CDP-2-C-methyl-D-erythritol 2-phosphate; these read DVH and HS. His-42 contacts a divalent metal cation. 4-CDP-2-C-methyl-D-erythritol 2-phosphate is bound by residues 56–58, 61–65, 100–106, 132–135, Phe-139, and Arg-142; these read DIG, FPDTD, AQVPKMA, and TTTE.

The protein belongs to the IspF family. In terms of assembly, homotrimer. The cofactor is a divalent metal cation.

The enzyme catalyses 4-CDP-2-C-methyl-D-erythritol 2-phosphate = 2-C-methyl-D-erythritol 2,4-cyclic diphosphate + CMP. Its pathway is isoprenoid biosynthesis; isopentenyl diphosphate biosynthesis via DXP pathway; isopentenyl diphosphate from 1-deoxy-D-xylulose 5-phosphate: step 4/6. In terms of biological role, involved in the biosynthesis of isopentenyl diphosphate (IPP) and dimethylallyl diphosphate (DMAPP), two major building blocks of isoprenoid compounds. Catalyzes the conversion of 4-diphosphocytidyl-2-C-methyl-D-erythritol 2-phosphate (CDP-ME2P) to 2-C-methyl-D-erythritol 2,4-cyclodiphosphate (ME-CPP) with a corresponding release of cytidine 5-monophosphate (CMP). In Sodalis glossinidius (strain morsitans), this protein is 2-C-methyl-D-erythritol 2,4-cyclodiphosphate synthase.